A 238-amino-acid chain; its full sequence is Cysteine-rich venom protein pseudecin (238 aa).

Positions 1–19 (MIAFIVLLSLAAVLQQSSG) are cleaved as a signal peptide. The propeptide occupies 20 to 28 (TVDFASESS). Residues 38–164 (VDKHNALRRS…SSKYLYVCQY (127 aa)) form the SCP domain. Zn(2+) contacts are provided by threonine 51 and serine 106. 8 disulfides stabilise this stretch: cysteine 75/cysteine 153, cysteine 92/cysteine 165, cysteine 148/cysteine 162, cysteine 184/cysteine 191, cysteine 187/cysteine 196, cysteine 200/cysteine 233, cysteine 209/cysteine 227, and cysteine 218/cysteine 231. Positions 200–233 (CNYNNDFSNCKSLAKKSKCQTEWIKKKCPASCFC) constitute a ShKT domain.

Expressed by the venom gland.

The protein resides in the secreted. Functionally, blocks olfactory (CNGA2) and retinal (CNGA1) CNG channel currents. Is really less potent that Pseudechetoxin. Does not affect neither depolarization- nor caffeine-induced contraction of smooth muscle. This chain is Cysteine-rich venom protein pseudecin, found in Pseudechis porphyriacus (Red-bellied black snake).